Reading from the N-terminus, the 554-residue chain is DNA ligase (554 aa).

Residue E253 coordinates ATP. The active-site N6-AMP-lysine intermediate is the K255. ATP contacts are provided by R260, R275, E304, F344, R418, and K424.

The protein belongs to the ATP-dependent DNA ligase family. The cofactor is Mg(2+).

It carries out the reaction ATP + (deoxyribonucleotide)n-3'-hydroxyl + 5'-phospho-(deoxyribonucleotide)m = (deoxyribonucleotide)n+m + AMP + diphosphate.. Its function is as follows. DNA ligase that seals nicks in double-stranded DNA during DNA replication, DNA recombination and DNA repair. In Haloarcula marismortui (strain ATCC 43049 / DSM 3752 / JCM 8966 / VKM B-1809) (Halobacterium marismortui), this protein is DNA ligase.